Here is a 220-residue protein sequence, read N- to C-terminus: CDP-diacylglycerol--inositol 3-phosphatidyltransferase (220 aa).

Over 1–20 the chain is Cytoplasmic; that stretch reads MSSNSTPEKVTAEHVLWYIP. The helical transmembrane segment at 21–41 threads the bilayer; the sequence is NKIGYVRVITAALSFFVMKNH. At 42-45 the chain is on the lumenal side; it reads PTAF. A helical membrane pass occupies residues 46–66; sequence TWLYSTSCLLDALDGTMARKY. Mg(2+) contacts are provided by Asp56 and Asp59. Positions 60, 64, and 70 each coordinate a CDP-1,2-diacyl-sn-glycerol. Topologically, residues 67–75 are cytoplasmic; the sequence is NQVSSLGAV. A helical transmembrane segment spans residues 76-96; the sequence is LDMVTDRSSTAGLMCFLCVQY. Mg(2+)-binding residues include Asp77 and Asp81. Residue Asp81 is the Proton acceptor of the active site. Residues 97-98 lie on the Lumenal side of the membrane; it reads PQ. A helical membrane pass occupies residues 99–119; it reads WCVFFQLMLGLDITSHYMHMY. Residues 120-145 lie on the Cytoplasmic side of the membrane; the sequence is ASLSAGKTSHKSVGEGESRLLHLYYT. A helical transmembrane segment spans residues 146-166; that stretch reads RRDVLFTICAFNELFYAGLYL. Residues 167-170 lie on the Lumenal side of the membrane; that stretch reads QLFS. The chain crosses the membrane as a helical span at residues 171-191; sequence NSATFGKWTTIISFPGYVFKQ. Over 192–220 the chain is Cytoplasmic; sequence TANVVQLKRAALILADNDAKNANEKNKTY.

It belongs to the CDP-alcohol phosphatidyltransferase class-I family. It depends on Mn(2+) as a cofactor. Requires Mg(2+) as cofactor.

It is found in the microsome membrane. The protein localises to the endoplasmic reticulum membrane. It localises to the golgi apparatus membrane. The protein resides in the mitochondrion outer membrane. It carries out the reaction a CDP-1,2-diacyl-sn-glycerol + myo-inositol = a 1,2-diacyl-sn-glycero-3-phospho-(1D-myo-inositol) + CMP + H(+). Its function is as follows. Catalyzes the synthesis of phosphatidylinositol (PtdIns). In Saccharomyces cerevisiae (strain ATCC 204508 / S288c) (Baker's yeast), this protein is CDP-diacylglycerol--inositol 3-phosphatidyltransferase.